The chain runs to 450 residues: Glutamate-1-semialdehyde 2,1-aminomutase (450 aa).

K262 carries the post-translational modification N6-(pyridoxal phosphate)lysine.

Belongs to the class-III pyridoxal-phosphate-dependent aminotransferase family. HemL subfamily. Homodimer. The cofactor is pyridoxal 5'-phosphate.

The protein resides in the cytoplasm. It carries out the reaction (S)-4-amino-5-oxopentanoate = 5-aminolevulinate. It participates in porphyrin-containing compound metabolism; protoporphyrin-IX biosynthesis; 5-aminolevulinate from L-glutamyl-tRNA(Glu): step 2/2. This is Glutamate-1-semialdehyde 2,1-aminomutase from Campylobacter hominis (strain ATCC BAA-381 / DSM 21671 / CCUG 45161 / LMG 19568 / NCTC 13146 / CH001A).